Consider the following 1233-residue polypeptide: Capping protein-inhibiting regulator of actin dynamics (1233 aa).

3 positions are modified to phosphoserine: S7, S28, and S132. Disordered stretches follow at residues 92 to 136, 157 to 224, and 269 to 527; these read AENK…SAGT, AKHK…RRRQ, and LLEE…WQEV. Positions 157–176 are enriched in basic residues; sequence AKHKLAVKPKKQRVSKKHRR. 4 stretches are compositionally biased toward basic and acidic residues: residues 200–211, 282–293, 302–322, and 329–362; these read PGEDKPTWHEEE, EAERAPREEQQR, DAER…ERRR, and AEER…KRQE. Residues 321-472 form a required for interaction with actin-capping proteins region; the sequence is RRLQAQAQAE…EQQGRSGDFQ (152 aa). Composition is skewed to acidic residues over residues 363-376 and 397-407; these read EEEA…EQQE and EEEDLGEEEEE. At S420 the chain carries Phosphoserine. Basic and acidic residues-rich tracts occupy residues 432-447 and 505-527; these read DQER…HSEE and VERK…WQEV. S556 is subject to Phosphoserine. Phosphothreonine is present on T559. 4 disordered regions span residues 560–586, 629–788, 815–1082, and 1097–1186; these read PAKD…HALP, HAEA…TTEG, EFTT…TEKV, and QKGF…ISDS. Residues 677-707 are compositionally biased toward basic and acidic residues; sequence KNAESDPRSSERDQLRPGDESTPRGRCDSRG. Polar residues predominate over residues 732 to 742; sequence GTETSKQSTEA. The span at 768–783 shows a compositional bias: basic and acidic residues; that stretch reads ELGKGPEKSEMHREPA. Polar residues-rich tracts occupy residues 815–825 and 852–863; these read EFTTSSDSETA and TNYSLRFNCDQQ. The span at 876–889 shows a compositional bias: low complexity; it reads GDSADAGPPAAGSA. Positions 908–921 are enriched in basic and acidic residues; sequence QERKQAPSTRRDSA. The span at 956–967 shows a compositional bias: low complexity; it reads PLAQKPALAPKP. A Phosphothreonine modification is found at T971. Phosphoserine occurs at positions 975 and 1017. The span at 994-1040 shows a compositional bias: basic and acidic residues; that stretch reads GRPDPEPSEPSKEDQESSDRRPPSPPGPEERKGQKRDEEEEATERKP. Residues 1047–1057 show a composition bias toward polar residues; sequence ATQQEKPSQTP. Basic and acidic residues-rich tracts occupy residues 1059–1082 and 1099–1124; these read AGRK…TEKV and GFRE…KLSK. Positions 1127-1139 are enriched in low complexity; the sequence is VSVSVQPGSSSVS. Residues 1151-1170 show a composition bias toward basic and acidic residues; that stretch reads PEEKRPETAVSRLERREQLK. The segment covering 1174–1183 has biased composition (polar residues); the sequence is TLPTSVTVEI.

In terms of assembly, directly interacts with actin-capping proteins CAPZA1, CAPZA2 and CAPZB; this interaction decreases the binding of capping proteins to actin. Expressed in intestinal epithelial cells (at protein level).

The protein localises to the cytoplasm. The protein resides in the cytosol. Functionally, involved in epithelial cell integrity by acting on the maintenance of the actin cytoskeleton. Positively regulates the actin polymerization, by inhibiting the interaction of actin-capping proteins with actin. The polypeptide is Capping protein-inhibiting regulator of actin dynamics (Homo sapiens (Human)).